A 559-amino-acid polypeptide reads, in one-letter code: Cocaine esterase (559 aa).

Positions 1 to 26 are cleaved as a signal peptide; sequence MRLHRLRARLSAVACGLLLLLVRGQG. Position 27 is a pyrrolidone carboxylic acid (Gln-27). Residues Cys-95 and Cys-123 are joined by a disulfide bond. Asn-111 carries N-linked (GlcNAc...) asparagine glycosylation. The Acyl-ester intermediate role is filled by Ser-228. An N-linked (GlcNAc...) asparagine glycan is attached at Asn-276. A disulfide bridge links Cys-280 with Cys-291. Catalysis depends on charge relay system residues Glu-345 and His-457. Residues 556 to 559 carry the Prevents secretion from ER motif; that stretch reads HTEL.

This sequence belongs to the type-B carboxylesterase/lipase family. In terms of assembly, monomer. In terms of processing, glycosylated. Preferentially expressed in intestine with moderate expression in liver. Within the intestine, highest expression is found in small intestine with lower expression in colon and rectum.

The protein localises to the endoplasmic reticulum lumen. The catalysed reaction is cocaine + H2O = ecgonine methyl ester + benzoate + H(+). It catalyses the reaction a carboxylic ester + H2O = an alcohol + a carboxylate + H(+). It carries out the reaction 4-methylumbelliferyl acetate + H2O = 4-methylumbelliferone + acetate + H(+). The enzyme catalyses 2-(5Z,8Z,11Z,14Z-eicosatetraenoyl)-glycerol + H2O = glycerol + (5Z,8Z,11Z,14Z)-eicosatetraenoate + H(+). The catalysed reaction is prostaglandin E2 1-glyceryl ester + H2O = prostaglandin E2 + glycerol + H(+). It catalyses the reaction prostaglandin F2alpha 1-glyceryl ester + H2O = prostaglandin F2alpha + glycerol + H(+). Its function is as follows. Involved in the detoxification of xenobiotics and in the activation of ester and amide prodrugs. Shows high catalytic efficiency for hydrolysis of cocaine, 4-methylumbelliferyl acetate, heroin and 6-monoacetylmorphine. Hydrolyzes aspirin, substrates with large alcohol group and small acyl group and endogenous lipids such as triacylglycerol. Converts monoacylglycerides to free fatty acids and glycerol. Hydrolyzes of 2-arachidonoylglycerol and prostaglandins. The chain is Cocaine esterase from Homo sapiens (Human).